The sequence spans 56 residues: Attractin (56 aa).

Cystine bridges form between Cys4-Cys41, Cys13-Cys33, and Cys20-Cys26.

In terms of tissue distribution, produced by the albumen gland of the egg cordons.

It is found in the secreted. Water-borne pheromone that attract the marine mollusk Aplysia into breeding aggregations and coordinate male and female reproductive behavior within the aggregation. This Aplysia vaccaria (California black sea hare) protein is Attractin (ATT).